The sequence spans 606 residues: Aspartate--tRNA(Asp/Asn) ligase (606 aa).

Position 196 (Glu196) interacts with L-aspartate. The tract at residues 220 to 223 (QIFK) is aspartate. L-aspartate is bound at residue Arg242. ATP is bound by residues 242 to 244 (RDE) and Gln251. Residue His465 coordinates L-aspartate. An ATP-binding site is contributed by Glu499. Position 506 (Arg506) interacts with L-aspartate. 551-554 (GMDR) is an ATP binding site.

This sequence belongs to the class-II aminoacyl-tRNA synthetase family. Type 1 subfamily. Homodimer.

The protein localises to the cytoplasm. It catalyses the reaction tRNA(Asx) + L-aspartate + ATP = L-aspartyl-tRNA(Asx) + AMP + diphosphate. Aspartyl-tRNA synthetase with relaxed tRNA specificity since it is able to aspartylate not only its cognate tRNA(Asp) but also tRNA(Asn). Reaction proceeds in two steps: L-aspartate is first activated by ATP to form Asp-AMP and then transferred to the acceptor end of tRNA(Asp/Asn). This is Aspartate--tRNA(Asp/Asn) ligase from Oleidesulfovibrio alaskensis (strain ATCC BAA-1058 / DSM 17464 / G20) (Desulfovibrio alaskensis).